The following is a 355-amino-acid chain: Cobalt-precorrin-5B C(1)-methyltransferase (355 aa).

The protein belongs to the CbiD family.

It catalyses the reaction Co-precorrin-5B + S-adenosyl-L-methionine = Co-precorrin-6A + S-adenosyl-L-homocysteine. It functions in the pathway cofactor biosynthesis; adenosylcobalamin biosynthesis; cob(II)yrinate a,c-diamide from sirohydrochlorin (anaerobic route): step 6/10. Functionally, catalyzes the methylation of C-1 in cobalt-precorrin-5B to form cobalt-precorrin-6A. The protein is Cobalt-precorrin-5B C(1)-methyltransferase of Parasynechococcus marenigrum (strain WH8102).